A 453-amino-acid chain; its full sequence is MAKKKATFICQECGYQSPKYLGRCPNCSAWSSFVEEVEVKEVKNARVSLAGEKSRPVKLKDVDNISYHRTQTDMSEFNRVLGGGVVPGSLILIGGDPGIGKSTLLLQVSTQLANKGTVLYVSGEESAEQIKLRSERLGDIDNEFYLYAETNMQAIRTEIENIKPDFLIIDSIQTIMSPDITGVQGSVSQVREVTAELMQLAKTNNIATFIVGHVTKEGTLAGPRMLEHMVDTVLYFEGERHHTFRILRAVKNRFGSTNEIGIFEMQSGGLVEVLNPSQVFLEERLDGATGSAVVVTMEGSRPILAEVQSLVTPTVFGNARRTTTGLDFNRVSLIMAVLEKRCGLLLQNQDAYLKSAGGVKLDEPAIDLAVAVAIASSYKEKPTSPQEAFLGEIGLTGEIRRVTRIEQRINEAAKLGFTKVYAPKNALQGIDIPQGIEVVGVTTVGQVLNAVFS.

A C4-type zinc finger spans residues 10-27 (CQECGYQSPKYLGRCPNC). Position 95–102 (95–102 (GDPGIGKS)) interacts with ATP. A RadA KNRFG motif motif is present at residues 251-255 (KNRFG). Residues 350–453 (DAYLKSAGGV…VGQVLNAVFS (104 aa)) are lon-protease-like.

It belongs to the RecA family. RadA subfamily.

Functionally, DNA-dependent ATPase involved in processing of recombination intermediates, plays a role in repairing DNA breaks. Stimulates the branch migration of RecA-mediated strand transfer reactions, allowing the 3' invading strand to extend heteroduplex DNA faster. Binds ssDNA in the presence of ADP but not other nucleotides, has ATPase activity that is stimulated by ssDNA and various branched DNA structures, but inhibited by SSB. Does not have RecA's homology-searching function. This Streptococcus pyogenes serotype M1 protein is DNA repair protein RadA.